A 269-amino-acid polypeptide reads, in one-letter code: Triosephosphate isomerase (269 aa).

A substrate-binding site is contributed by 8–10 (NWK). Residue H105 is the Electrophile of the active site. E183 acts as the Proton acceptor in catalysis. Substrate contacts are provided by residues G189, S227, and 248-249 (GG).

This sequence belongs to the triosephosphate isomerase family. Homodimer.

The protein resides in the cytoplasm. The enzyme catalyses D-glyceraldehyde 3-phosphate = dihydroxyacetone phosphate. The protein operates within carbohydrate biosynthesis; gluconeogenesis. Its pathway is carbohydrate degradation; glycolysis; D-glyceraldehyde 3-phosphate from glycerone phosphate: step 1/1. Its function is as follows. Involved in the gluconeogenesis. Catalyzes stereospecifically the conversion of dihydroxyacetone phosphate (DHAP) to D-glyceraldehyde-3-phosphate (G3P). The polypeptide is Triosephosphate isomerase (Psychrobacter cryohalolentis (strain ATCC BAA-1226 / DSM 17306 / VKM B-2378 / K5)).